The following is a 255-amino-acid chain: Reaction center protein L chain (255 aa).

A run of 3 helical transmembrane segments spans residues 11–33 (FFGV…GAAL), 61–89 (GGLW…SRKL), and 94–116 (HVPA…RPLL). Residues histidine 131 and histidine 151 each contribute to the (7R,8Z)-bacteriochlorophyll b site. The chain crosses the membrane as a helical span at residues 149–176 (PMHMVAVTLFFTTTLALALHGSLVLAAI). Histidine 168 contacts Fe cation. Residue phenylalanine 194 participates in a ubiquinone binding. A helical membrane pass occupies residues 203 to 228 (GTLGIHRLGLFLALGAGFASATCILL). Histidine 208 contributes to the Fe cation binding site.

This sequence belongs to the reaction center PufL/M/PsbA/D family. As to quaternary structure, reaction center is composed of four bacteriochlorophylls, two bacteriopheophytins, two ubiquinones, one iron, and two highly hydrophobic polypeptide chains (designated L and M).

The protein localises to the cell inner membrane. The reaction center is a membrane-bound complex that mediates the initial photochemical event in the electron transfer process of photosynthesis. The chain is Reaction center protein L chain (pufL) from Acidiphilium multivorum.